Reading from the N-terminus, the 92-residue chain is UPF0298 protein ABC2380 (92 aa).

This sequence belongs to the UPF0298 family.

The protein localises to the cytoplasm. This is UPF0298 protein ABC2380 from Shouchella clausii (strain KSM-K16) (Alkalihalobacillus clausii).